Reading from the N-terminus, the 312-residue chain is Putative electron transfer flavoprotein subunit YdiR (312 aa).

254–282 provides a ligand contact to FAD; that stretch reads LYLTLGISGQIQHMVGGNGAKVIVAINKD.

This sequence belongs to the ETF alpha-subunit/FixB family. YdiR and YdiQ form a heterodimer.

May play a role in a redox process. In Escherichia coli (strain K12), this protein is Putative electron transfer flavoprotein subunit YdiR (ydiR).